Here is a 715-residue protein sequence, read N- to C-terminus: METAEKECGALGGLFQAIVNDMKSSYPIWEDFNSKAAKLHSQLRTTVLAAVAFLDAFQKVADMATNTRGATRDIGSALTRMCMRHRSIETKLRQFTNALLESLINPLQERIEDWKKSANQLDKDHAKEYKRARHEIKKKSSDTLKLQKKARKGKGDLQPQLDSALQDVNDMYLLLEETEKQAVRRALIEERGRFCTFITFLQPVVNGELTMLGEITHLQGIIDDLVVLTADPHKLPPASEQVIKDLKGSDYSWSYQTPPSSPSSSNSRKSSMCSLAQPATTRLSSVSSHDSGFVSQDPTYSKPPSPMPSDITSQKSSSSASSEASETCQSVSECSSPTSDWTKAGPHEQPSATTLQRRKDRVEHLRDTEPGPTGGGTVGSSGEEVPRTRMSPATIAAKHGEEVSPAASDLAMVLTRGLSLEHQKSSRDSLQYSSGYSTQTTTPSCSEDTIPSQGSDYDCYSVNGDADSEGPPEFDKSSTIPRNSNIAQNYRRLIQTKRPASTAGLPTAGLPTAMGLPSGAPPGVATIRRTPSTKPTVRRALSSAGPIPIRPPIVPVKTPTVPDSPGYVGPTRAGSEECVFYTDEVASPLAPDLAKASPKRLSLPNTAWGSQSPEVASYGGGAAVGLATEDEEQQLAANRHSLVEKLGELVAGAHALGEGQFPFPTALSATPSEETPTPPPAATSDPPAEDMLVAIRRGVRLRRTVTNDRSAPRIL.

The IMD domain occupies M1 to S249. A coiled-coil region spans residues H134–D156. Composition is skewed to low complexity over residues W253–S274, S284–S295, and T312–S330. 3 disordered regions span residues W253 to P405, L420 to N485, and I527 to P562. T257 carries the post-translational modification Phosphothreonine. S261 carries the phosphoserine modification. The span at V331 to W341 shows a compositional bias: polar residues. The segment covering D360 to E369 has biased composition (basic and acidic residues). S404 carries the phosphoserine modification. Positions S429 to T442 are enriched in low complexity. Residues P443–S455 are compositionally biased toward polar residues. S542, S564, S575, S587, S597, and S602 each carry phosphoserine. T606 bears the Phosphothreonine mark. The disordered stretch occupies residues F661–D690. The 18-residue stretch at P687 to T704 folds into the WH2 domain.

It belongs to the MTSS family. Interacts (via IMD domain) with RAC1; this interaction may be important to potentiate PDGF-induced RAC1 activation.

Its subcellular location is the cytoplasm. The protein localises to the cell projection. It is found in the ruffle. Its function is as follows. Involved in plasma membrane dynamics. Potentiated PDGF-mediated formation of membrane ruffles and lamellipodia in fibroblasts, acting via RAC1 activation. May function in actin bundling. In Mus musculus (Mouse), this protein is Protein MTSS 2 (Mtss2).